A 231-amino-acid chain; its full sequence is Insertion sequence IS1162 putative ATP-binding protein (231 aa).

Position 107-114 (glycine 107–threonine 114) interacts with ATP.

Belongs to the IS21/IS1162 putative ATP-binding protein family.

The chain is Insertion sequence IS1162 putative ATP-binding protein from Pseudomonas fluorescens.